Reading from the N-terminus, the 223-residue chain is Phosphoribosylformylglycinamidine synthase subunit PurQ (223 aa).

The region spanning 2 to 223 is the Glutamine amidotransferase type-1 domain; it reads KFAVLKFPGS…MVNSWREQNV (222 aa). The active-site Nucleophile is the Cys-85. Residues His-193 and Glu-195 contribute to the active site.

In terms of assembly, part of the FGAM synthase complex composed of 1 PurL, 1 PurQ and 2 PurS subunits.

The protein localises to the cytoplasm. The enzyme catalyses N(2)-formyl-N(1)-(5-phospho-beta-D-ribosyl)glycinamide + L-glutamine + ATP + H2O = 2-formamido-N(1)-(5-O-phospho-beta-D-ribosyl)acetamidine + L-glutamate + ADP + phosphate + H(+). The catalysed reaction is L-glutamine + H2O = L-glutamate + NH4(+). The protein operates within purine metabolism; IMP biosynthesis via de novo pathway; 5-amino-1-(5-phospho-D-ribosyl)imidazole from N(2)-formyl-N(1)-(5-phospho-D-ribosyl)glycinamide: step 1/2. Part of the phosphoribosylformylglycinamidine synthase complex involved in the purines biosynthetic pathway. Catalyzes the ATP-dependent conversion of formylglycinamide ribonucleotide (FGAR) and glutamine to yield formylglycinamidine ribonucleotide (FGAM) and glutamate. The FGAM synthase complex is composed of three subunits. PurQ produces an ammonia molecule by converting glutamine to glutamate. PurL transfers the ammonia molecule to FGAR to form FGAM in an ATP-dependent manner. PurS interacts with PurQ and PurL and is thought to assist in the transfer of the ammonia molecule from PurQ to PurL. The polypeptide is Phosphoribosylformylglycinamidine synthase subunit PurQ (Staphylococcus saprophyticus subsp. saprophyticus (strain ATCC 15305 / DSM 20229 / NCIMB 8711 / NCTC 7292 / S-41)).